We begin with the raw amino-acid sequence, 357 residues long: 3-isopropylmalate dehydrogenase (357 aa).

Position 76 to 89 (76 to 89) interacts with NAD(+); sequence GPQWDTIDPSLRPE. Residues arginine 96, arginine 106, arginine 134, and aspartate 224 each coordinate substrate. The Mg(2+) site is built by aspartate 224, aspartate 248, and aspartate 252. Position 282 to 294 (282 to 294) interacts with NAD(+); it reads GSAPDIAGKGIAN.

It belongs to the isocitrate and isopropylmalate dehydrogenases family. LeuB type 1 subfamily. As to quaternary structure, homodimer. Mg(2+) is required as a cofactor. The cofactor is Mn(2+).

The protein resides in the cytoplasm. It carries out the reaction (2R,3S)-3-isopropylmalate + NAD(+) = 4-methyl-2-oxopentanoate + CO2 + NADH. Its pathway is amino-acid biosynthesis; L-leucine biosynthesis; L-leucine from 3-methyl-2-oxobutanoate: step 3/4. Functionally, catalyzes the oxidation of 3-carboxy-2-hydroxy-4-methylpentanoate (3-isopropylmalate) to 3-carboxy-4-methyl-2-oxopentanoate. The product decarboxylates to 4-methyl-2 oxopentanoate. The protein is 3-isopropylmalate dehydrogenase of Xanthomonas euvesicatoria pv. vesicatoria (strain 85-10) (Xanthomonas campestris pv. vesicatoria).